An 827-amino-acid chain; its full sequence is Putative potassium transporter 12 (827 aa).

The disordered stretch occupies residues 1–31 (MEEIEEGSSNNSIRRVGTGSSDRRWVDGSEV). Topologically, residues 1–82 (MEEIEEGSSN…AGSHGHNLKD (82 aa)) are cytoplasmic. The helical transmembrane segment at 83 to 103 (LSLLTTLGIAFQTLGVVYGDM) threads the bilayer. The Extracellular segment spans residues 104–129 (GTSPLYVFSDVFSKVPIRSEVDVLGA). A helical membrane pass occupies residues 130 to 150 (LSLVIYTIAVIPLAKYVFVVL). Topologically, residues 151 to 216 (KANDNGEGGT…ALETKGYLKT (66 aa)) are cytoplasmic. A helical transmembrane segment spans residues 217–237 (LLLLLVLMGTSMIIGDGILTP). At 238–253 (AMSVMSAMSGLQGEVK) the chain is on the extracellular side. Residues 254 to 274 (GFGTNALVMSSIVILVALFSI) traverse the membrane as a helical segment. Topologically, residues 275 to 281 (QRFGTGK) are cytoplasmic. Residues 282–302 (VGFLFAPVLALWFFSLGAIGI) form a helical membrane-spanning segment. Over 303 to 335 (YNLLKYDFTVIRALNPFYIVLFFNKNSKQAWSA) the chain is Extracellular. The helical transmembrane segment at 336-356 (LGGCVLCITGAEAMFADLGHF) threads the bilayer. Over 357–363 (SVRSIQM) the chain is Cytoplasmic. Residues 364–384 (AFTCVVFPCLLLAYMGQAAYL) traverse the membrane as a helical segment. The Extracellular portion of the chain corresponds to 385 to 402 (TKHPEASARIFYDSVPKS). Residues 403-423 (LFWPVFVIATLAAMIASQAMI) form a helical membrane-spanning segment. Residues 424–454 (SATFSCVKQAMALGCFPRLKIIHTSKKRIGQ) lie on the Cytoplasmic side of the membrane. A helical transmembrane segment spans residues 455 to 475 (IYIPVINWFLMIMCILVVSIF). Topologically, residues 476-480 (RSTTH) are extracellular. 2 consecutive transmembrane segments (helical) span residues 481–501 (IANA…VLVT) and 502–522 (LVML…PLIF). Topologically, residues 523 to 536 (GSVETIYLLAVLTK) are extracellular. The chain crosses the membrane as a helical span at residues 537–557 (ILEGGWVPLVFATFFLTVMYI). Topologically, residues 558–827 (WNYGSVLKYQ…ILQAGMTYMV (270 aa)) are cytoplasmic. Residues 728-750 (RSEPEQELDSEVLPSSSVGSSME) are disordered. Low complexity predominate over residues 738-748 (EVLPSSSVGSS).

Belongs to the HAK/KUP transporter (TC 2.A.72.3) family.

The protein localises to the cell membrane. Functionally, putative potassium transporter. The protein is Putative potassium transporter 12 (POT12) of Arabidopsis thaliana (Mouse-ear cress).